Here is a 316-residue protein sequence, read N- to C-terminus: Lipoyl synthase (316 aa).

Residues cysteine 60, cysteine 65, cysteine 71, cysteine 86, cysteine 90, cysteine 93, and serine 297 each contribute to the [4Fe-4S] cluster site. The Radical SAM core domain maps to tryptophan 72 to threonine 286.

Belongs to the radical SAM superfamily. Lipoyl synthase family. [4Fe-4S] cluster serves as cofactor.

It is found in the cytoplasm. It carries out the reaction [[Fe-S] cluster scaffold protein carrying a second [4Fe-4S](2+) cluster] + N(6)-octanoyl-L-lysyl-[protein] + 2 oxidized [2Fe-2S]-[ferredoxin] + 2 S-adenosyl-L-methionine + 4 H(+) = [[Fe-S] cluster scaffold protein] + N(6)-[(R)-dihydrolipoyl]-L-lysyl-[protein] + 4 Fe(3+) + 2 hydrogen sulfide + 2 5'-deoxyadenosine + 2 L-methionine + 2 reduced [2Fe-2S]-[ferredoxin]. Its pathway is protein modification; protein lipoylation via endogenous pathway; protein N(6)-(lipoyl)lysine from octanoyl-[acyl-carrier-protein]: step 2/2. Functionally, catalyzes the radical-mediated insertion of two sulfur atoms into the C-6 and C-8 positions of the octanoyl moiety bound to the lipoyl domains of lipoate-dependent enzymes, thereby converting the octanoylated domains into lipoylated derivatives. The sequence is that of Lipoyl synthase from Nocardioides sp. (strain ATCC BAA-499 / JS614).